Reading from the N-terminus, the 353-residue chain is MVGDTLKLLSPLMTRYFFLLFYSTDSSDLNENQHPLDFDEMAFGKVKSGISFLIQTGVGILGNSFLLCFYNLILFTGHKLRPTDLILSHLALANSMVLFFKGIPQTMAAFGLKYLLNDTGCKFVFYYHRVGTRVSLSTICLLNGFQAIKLNPSICRWMEIKIRSPRFIDFCCLLCWVPHVLMNASVLLLVNGPLNSKNSSAKNNYGYCSYKASKRFSSLHAVLYFSPDFMSLGFMVWASGSMVFFLYRHKQQVQHNHSNRLSCRPSQETRATRTIMVLVSSFFVFYSVHSFLTIWTTVVANPGQWIVNNSVLVASYFPSRSPFVLIMSDTRISQFCFACRTRKTLFPNLVVMP.

The Extracellular portion of the chain corresponds to 1–56 (MVGDTLKLLSPLMTRYFFLLFYSTDSSDLNENQHPLDFDEMAFGKVKSGISFLIQT). Residues 57-77 (GVGILGNSFLLCFYNLILFTG) traverse the membrane as a helical segment. Topologically, residues 78–84 (HKLRPTD) are cytoplasmic. Residues 85-105 (LILSHLALANSMVLFFKGIPQ) traverse the membrane as a helical segment. Topologically, residues 106-132 (TMAAFGLKYLLNDTGCKFVFYYHRVGT) are extracellular. N117 carries an N-linked (GlcNAc...) asparagine glycan. The helical transmembrane segment at 133-153 (RVSLSTICLLNGFQAIKLNPS) threads the bilayer. Topologically, residues 154–169 (ICRWMEIKIRSPRFID) are cytoplasmic. The helical transmembrane segment at 170–190 (FCCLLCWVPHVLMNASVLLLV) threads the bilayer. Residues 191 to 226 (NGPLNSKNSSAKNNYGYCSYKASKRFSSLHAVLYFS) are Extracellular-facing. N-linked (GlcNAc...) asparagine glycosylation is present at N198. The chain crosses the membrane as a helical span at residues 227-247 (PDFMSLGFMVWASGSMVFFLY). The Cytoplasmic segment spans residues 248 to 274 (RHKQQVQHNHSNRLSCRPSQETRATRT). A helical membrane pass occupies residues 275 to 295 (IMVLVSSFFVFYSVHSFLTIW). Topologically, residues 296–303 (TTVVANPG) are extracellular. The chain crosses the membrane as a helical span at residues 304-324 (QWIVNNSVLVASYFPSRSPFV). Over 325 to 353 (LIMSDTRISQFCFACRTRKTLFPNLVVMP) the chain is Cytoplasmic.

The protein belongs to the G-protein coupled receptor 1 family.

Its subcellular location is the cell membrane. Putative pheromone receptor. The sequence is that of Vomeronasal type-1 receptor 1 (VN1R1) from Gorilla gorilla gorilla (Western lowland gorilla).